Reading from the N-terminus, the 101-residue chain is NAD(P)H-quinone oxidoreductase subunit 4L, chloroplastic (101 aa).

3 helical membrane passes run 2–22 (MFERVLFLSVYLFSIGIYGLI), 32–52 (ICLELILNSINLNLVTFSDLF), and 61–81 (IFAIFVIALAAAEAAIGLSIL).

This sequence belongs to the complex I subunit 4L family. As to quaternary structure, NDH is composed of at least 16 different subunits, 5 of which are encoded in the nucleus.

It localises to the plastid. The protein localises to the chloroplast thylakoid membrane. The catalysed reaction is a plastoquinone + NADH + (n+1) H(+)(in) = a plastoquinol + NAD(+) + n H(+)(out). The enzyme catalyses a plastoquinone + NADPH + (n+1) H(+)(in) = a plastoquinol + NADP(+) + n H(+)(out). Its function is as follows. NDH shuttles electrons from NAD(P)H:plastoquinone, via FMN and iron-sulfur (Fe-S) centers, to quinones in the photosynthetic chain and possibly in a chloroplast respiratory chain. The immediate electron acceptor for the enzyme in this species is believed to be plastoquinone. Couples the redox reaction to proton translocation, and thus conserves the redox energy in a proton gradient. The polypeptide is NAD(P)H-quinone oxidoreductase subunit 4L, chloroplastic (Zea mays (Maize)).